An 851-amino-acid chain; its full sequence is DNA mismatch repair protein MutS (851 aa).

602–609 contacts ATP; the sequence is GPNMSGKS.

It belongs to the DNA mismatch repair MutS family.

Its function is as follows. This protein is involved in the repair of mismatches in DNA. It is possible that it carries out the mismatch recognition step. This protein has a weak ATPase activity. This is DNA mismatch repair protein MutS from Streptococcus pyogenes serotype M18 (strain MGAS8232).